The primary structure comprises 583 residues: Sensor protein SrrB (583 aa).

Topologically, residues 1–11 are cytoplasmic; the sequence is MMSRLNSVVIK. Residues 12–32 form a helical membrane-spanning segment; that stretch reads LWLTIILIVTTVLILLSIALI. The Extracellular segment spans residues 33 to 174; it reads TFMQYYFTQE…SIEDTNNAIT (142 aa). Residues 175-195 form a helical membrane-spanning segment; sequence IITIITAVIFLTITTVFAFFL. The Cytoplasmic segment spans residues 196-583; that stretch reads SSRITKPLRR…TFIIKLPKPE (388 aa). Positions 197-249 constitute an HAMP domain; that stretch reads SRITKPLRRLRDQATRVSEGDYSYKPSVTTKDEIGQLSQAFNQMSTEIEEHVD. In terms of domain architecture, Histidine kinase spans 366-583; that stretch reads NVSHELRTPI…TFIIKLPKPE (218 aa). At histidine 369 the chain carries Phosphohistidine; by autocatalysis.

The protein localises to the cell membrane. The catalysed reaction is ATP + protein L-histidine = ADP + protein N-phospho-L-histidine.. Its function is as follows. Member of the two-component regulatory system SrrA/SrrB, which is involved in the global regulation of staphylococcal virulence factors in response to environmental oxygen levels as well as biofilm formation. Also plays an essential role in host-derived nitric oxide resistance by regulating hmp/flavohemoglobin, an enzyme that detoxifies nitric oxide by converting it to nitrate. Functions as a sensor protein kinase which is autophosphorylated at a histidine residue and transfers its phosphate group to SrrA. In turn, SrrA binds to the upstream promoter regions of the target genes to positively and negatively regulate their expression. This Staphylococcus aureus (strain MW2) protein is Sensor protein SrrB (srrB).